We begin with the raw amino-acid sequence, 115 residues long: NADH-ubiquinone oxidoreductase chain 3 (115 aa).

3 consecutive transmembrane segments (helical) span residues 4-24 (IMAM…AFWL), 55-75 (FFLV…LLPL), and 84-104 (MFLT…GLAY).

The protein belongs to the complex I subunit 3 family. Core subunit of respiratory chain NADH dehydrogenase (Complex I) which is composed of 45 different subunits. Interacts with TMEM186. Interacts with TMEM242.

Its subcellular location is the mitochondrion inner membrane. It carries out the reaction a ubiquinone + NADH + 5 H(+)(in) = a ubiquinol + NAD(+) + 4 H(+)(out). Core subunit of the mitochondrial membrane respiratory chain NADH dehydrogenase (Complex I) which catalyzes electron transfer from NADH through the respiratory chain, using ubiquinone as an electron acceptor. Essential for the catalytic activity of complex I. The polypeptide is NADH-ubiquinone oxidoreductase chain 3 (Phyllotis darwinii (Darwin's leaf-eared mouse)).